The chain runs to 395 residues: Ribosomal RNA small subunit methyltransferase H (395 aa).

S-adenosyl-L-methionine contacts are provided by residues 101 to 103, Asp-120, Tyr-147, Asp-171, and Gln-178; that span reads GGH.

It belongs to the methyltransferase superfamily. RsmH family.

The protein resides in the cytoplasm. The enzyme catalyses cytidine(1402) in 16S rRNA + S-adenosyl-L-methionine = N(4)-methylcytidine(1402) in 16S rRNA + S-adenosyl-L-homocysteine + H(+). Specifically methylates the N4 position of cytidine in position 1402 (C1402) of 16S rRNA. In Mycobacterium marinum (strain ATCC BAA-535 / M), this protein is Ribosomal RNA small subunit methyltransferase H.